The following is a 230-amino-acid chain: MDFESKYCTSQVNGTITITTRKVLDENLKSLLDEGKGELFLSCIPRNHSCSPRWIVEVASELGEVYIMRYKIDFSGNSRGYAYLQYINVDLKESAMQYLPMRFRQLCMCLRVEPSTNNRELVLKNVESSLRPWQVYQEMLKIHPFTIVRVYEYQLDQFFYIFEYRNNDSAASAHQRVRNSIRKFGEHAHISWLTAENILSRASGSFCFQREVSQNRTRRVPPRQKGCFKF.

Residues Gly-37 to Ser-128 form the RRM domain.

Part of a complex composed of at least tut, bam and bgcn; complex formation does not require RNA. Interacts with bam (via N-terminus); the interaction is direct. Interacts with bgcn; the interaction is indirect and is mediated by bam. As part of the bam-bgcn-tut complex associates with twin; may recruit the CCR4-NOT1 deadenylation complex to mRNA 3'UTRs to mediate post-transcriptional regulation of expression.

It is found in the cytoplasm. Functionally, RNA binding protein that forms a complex with bam and bgcn, involved in 3'UTR-dependent regulation of a subset of mRNAs. Preferentially binds a long isoform of mei-P26 transcripts. Involved in 3'UTR-dependent post-transcriptional repression of several 3'-RNA processing factors. Involved in promoting germline stem cell lineage differentiation and mitosis-to-meiosis transition. Required for proper transit amplification of spermatogonia. The sequence is that of Protein tumorous testis from Drosophila melanogaster (Fruit fly).